Consider the following 30-residue polypeptide: Trypsin inhibitor 7 (30 aa).

Cystine bridges form between cysteine 4–cysteine 21, cysteine 11–cysteine 23, and cysteine 17–cysteine 29.

This sequence belongs to the protease inhibitor I7 (squash-type serine protease inhibitor) family.

The protein localises to the secreted. Strongly inhibits trypsin, weakly inhibits chymotrypsin. This is Trypsin inhibitor 7 from Cyclanthera pedata (Achocha).